The chain runs to 504 residues: NADH-quinone oxidoreductase subunit N (504 aa).

14 helical membrane passes run 9 to 29 (IALL…LSII), 38 to 58 (AVLT…HMMW), 78 to 98 (VLYV…GYVW), 114 to 134 (LLIA…IVLF), 135 to 155 (LGIE…VFSK), 164 to 184 (YIIL…FIYC), 216 to 236 (IVIG…CVPF), 254 to 274 (YLAT…LLIL), 282 to 302 (LHIF…LMAI), 309 to 329 (RMLA…LIAL), 341 to 361 (ISVY…IVNI), 392 to 412 (VIFV…GFIG), 425 to 447 (LWFL…LKII), and 476 to 496 (FMVI…QFIV).

Belongs to the complex I subunit 2 family. NDH-1 is composed of 13 different subunits. Subunits NuoA, H, J, K, L, M, N constitute the membrane sector of the complex.

It localises to the cell inner membrane. It carries out the reaction a quinone + NADH + 5 H(+)(in) = a quinol + NAD(+) + 4 H(+)(out). Its function is as follows. NDH-1 shuttles electrons from NADH, via FMN and iron-sulfur (Fe-S) centers, to quinones in the respiratory chain. The immediate electron acceptor for the enzyme in this species is believed to be ubiquinone. Couples the redox reaction to proton translocation (for every two electrons transferred, four hydrogen ions are translocated across the cytoplasmic membrane), and thus conserves the redox energy in a proton gradient. In Blochmanniella floridana, this protein is NADH-quinone oxidoreductase subunit N.